We begin with the raw amino-acid sequence, 584 residues long: MANEDCPKAADSPFSSDKHAQLILAQINKMRNGQHFCDVQLQVGQESFKAHRLVLAASSPYFAALFTGGMKESSKDVVPILGIEAGIFQILLDFIYTGIVNIGVNNVQELIIAADMLQLTEVVHLCCEFLKGQIDPLNCIGIFQFSEQIACHDLLEFSENYIHVHFLEVHSGEEFLALTKDQLIKILRSEELSIEDEYQVFLAAMQWILKDLGKRRKHVVEVLDPIRFPLLPPQRLLKYIEGVSDFNLRVALQTLLKEYCEVCKSPKENKFCSFLQTSKVRPRKKARKYLYAVGGYTRLQGGRWSDSRALSCVERFDTFSQYWTTVSSLHQARSGLGVTVLGGMVYAIGGEKDSMIFDCTECYDPVTKQWTTVASMNHPRCGLGVCVCYGAIYALGGWVGAEIGNTIERFDPDENKWEVVGNMAVSRYYFGCCEMQGLIYVIGGISNEGIELRSFEVYDPLSKRWSPLPPMGTRRAYLGVAALNDCIYSVGGWNETQDALHTVEKYSFEEEKWVEVASMKVPRAGMCVVAVNGLLYVSGGRSSSHDFLAPGTLDSVEVYNPHSDTWTEIGNMITSRCEGGVAVL.

Positions 37–104 constitute a BTB domain; that stretch reads CDVQLQVGQE…IYTGIVNIGV (68 aa). 6 Kelch repeats span residues 289–343, 344–390, 391–437, 439–485, 487–533, and 535–583; these read YLYA…VLGG, MVYA…VCYG, AIYA…EMQG, IYVI…ALND, IYSV…AVNG, and LYVS…GVAV.

Its subcellular location is the cytoplasm. The protein resides in the cytoskeleton. Its function is as follows. May play a role in organizing the actin cytoskeleton. The protein is Actin-binding protein IPP (IPP) of Homo sapiens (Human).